We begin with the raw amino-acid sequence, 172 residues long: NADH-quinone oxidoreductase subunit B (172 aa).

[4Fe-4S] cluster is bound by residues Cys52, Cys53, Cys117, and Cys147.

The protein belongs to the complex I 20 kDa subunit family. NDH-1 is composed of 14 different subunits. Subunits NuoB, C, D, E, F, and G constitute the peripheral sector of the complex. [4Fe-4S] cluster serves as cofactor.

Its subcellular location is the cell inner membrane. The catalysed reaction is a quinone + NADH + 5 H(+)(in) = a quinol + NAD(+) + 4 H(+)(out). NDH-1 shuttles electrons from NADH, via FMN and iron-sulfur (Fe-S) centers, to quinones in the respiratory chain. Couples the redox reaction to proton translocation (for every two electrons transferred, four hydrogen ions are translocated across the cytoplasmic membrane), and thus conserves the redox energy in a proton gradient. The polypeptide is NADH-quinone oxidoreductase subunit B (Ehrlichia ruminantium (strain Gardel)).